Reading from the N-terminus, the 656-residue chain is Heat shock 70 kDa protein, mitochondrial (656 aa).

The transit peptide at 1–23 (MFARRLRGAGSLAAASLARWQSS) directs the protein to the mitochondrion. The tract at residues 624–656 (EYQQAAAGNSSSSSGNTDSSQGEQQQQGDQQKQ) is disordered. Over residues 626 to 656 (QQAAAGNSSSSSGNTDSSQGEQQQQGDQQKQ) the composition is skewed to low complexity.

Belongs to the heat shock protein 70 family.

The protein localises to the mitochondrion matrix. Its subcellular location is the kinetoplast. Its function is as follows. May participate in eukaryotic mitochondrial DNA replication. In Trypanosoma cruzi, this protein is Heat shock 70 kDa protein, mitochondrial (MTP70).